A 322-amino-acid chain; its full sequence is Cytochrome c biogenesis protein CcsA (322 aa).

The next 8 helical transmembrane spans lie at 9 to 29, 44 to 64, 71 to 91, 98 to 118, 143 to 163, 226 to 246, 253 to 273, and 287 to 307; these read ILTHISFSIVSIVITLHLITL, GMIATFLCLTGLLTTRWIYSG, LYESLIFLSWSFSLIHIVPYF, LTTITASITIFTQGFATSGLL, MILSYAALLCGSLLSVALLVI, VISLGFIFLTIGILSGAVWAN, WSWDPKETWAFITWIVFAIYL, and AIVATLGFLIIWICYFGVNLL.

The protein belongs to the CcmF/CycK/Ccl1/NrfE/CcsA family. In terms of assembly, may interact with Ccs1.

The protein localises to the plastid. It localises to the chloroplast thylakoid membrane. Required during biogenesis of c-type cytochromes (cytochrome c6 and cytochrome f) at the step of heme attachment. In Helianthus annuus (Common sunflower), this protein is Cytochrome c biogenesis protein CcsA.